We begin with the raw amino-acid sequence, 281 residues long: Aliphatic sulfonates import ATP-binding protein SsuB (281 aa).

Residues 40–263 enclose the ABC transporter domain; it reads LTLRNLRKSF…RRGSADLAAL (224 aa). Position 72–79 (72–79) interacts with ATP; that stretch reads GRSGCGKS.

The protein belongs to the ABC transporter superfamily. Aliphatic sulfonates importer (TC 3.A.1.17.2) family. The complex is composed of two ATP-binding proteins (SsuB), two transmembrane proteins (SsuC) and a solute-binding protein (SsuA).

The protein resides in the cell inner membrane. It catalyses the reaction ATP + H2O + aliphatic sulfonate-[sulfonate-binding protein]Side 1 = ADP + phosphate + aliphatic sulfonateSide 2 + [sulfonate-binding protein]Side 1.. Part of the ABC transporter complex SsuABC involved in aliphatic sulfonates import. Responsible for energy coupling to the transport system. The protein is Aliphatic sulfonates import ATP-binding protein SsuB of Rhodopseudomonas palustris (strain BisA53).